The sequence spans 284 residues: Protein-S-isoprenylcysteine O-methyltransferase (284 aa).

Residues 1–16 lie on the Cytoplasmic side of the membrane; sequence MAGCAARVPPGSEARL. Residues 17–33 form a helical membrane-spanning segment; that stretch reads SLATFLLGASVLALPLL. Residues 34-41 are Lumenal-facing; sequence TRAGLQGR. A helical membrane pass occupies residues 42-59; sequence TGLALYVAGLNALLLLLY. Residues 60–69 lie on the Cytoplasmic side of the membrane; sequence RPPRYQIAIR. A helical transmembrane segment spans residues 70–87; sequence ACFLGFVFGCGVLLSFSQ. Residues 88-92 are Lumenal-facing; sequence SSWNH. A helical transmembrane segment spans residues 93–112; it reads FGWYVCSLSLFHYSEYLVTA. The Cytoplasmic segment spans residues 113–131; sequence VNNPKSLSLDSFLLNHSLE. A helical transmembrane segment spans residues 132–149; the sequence is YTVAALSSWIEFTLENIF. The Lumenal portion of the chain corresponds to 150–154; it reads WPELK. A helical membrane pass occupies residues 155-174; the sequence is QITWLSAAGLLMVIFGECLR. The Cytoplasmic segment spans residues 175–212; it reads KVAMFTAGSNFNHVVQSEKSDTHTLVTSGVYAWCRHPS. Residues glutamine 190, 197-200, tyrosine 205, and 210-213 contribute to the S-adenosyl-L-methionine site; these read HTLV and HPSY. A helical membrane pass occupies residues 213–228; the sequence is YVGWFYWSIGTQVMLC. Asparagine 229 is a topological domain (lumenal). A helical membrane pass occupies residues 230 to 244; sequence PICGVVYALTVWRFF. The Cytoplasmic segment spans residues 245 to 284; the sequence is RDRTEEEEISLIHFFGEEYLDYKKRVPTGLPFIKGVKVGL. Residue arginine 247 participates in substrate binding. Glutamate 251 is an S-adenosyl-L-methionine binding site.

This sequence belongs to the class VI-like SAM-binding methyltransferase superfamily. Isoprenylcysteine carboxyl methyltransferase family.

Its subcellular location is the endoplasmic reticulum membrane. It carries out the reaction [protein]-C-terminal S-[(2E,6E)-farnesyl]-L-cysteine + S-adenosyl-L-methionine = [protein]-C-terminal S-[(2E,6E)-farnesyl]-L-cysteine methyl ester + S-adenosyl-L-homocysteine. In terms of biological role, catalyzes the post-translational methylation of isoprenylated C-terminal cysteine residues. The protein is Protein-S-isoprenylcysteine O-methyltransferase of Rattus norvegicus (Rat).